The chain runs to 74 residues: Pelophylaxin-3 (74 aa).

An N-terminal signal peptide occupies residues 1–22; it reads MFTLKKSLLLVFFLGTISLSLC. The propeptide occupies 23-39; sequence EDERNADEDDGEMTEEV. Cysteines 68 and 74 form a disulfide.

In terms of tissue distribution, expressed by the skin glands.

It localises to the secreted. Antimicrobial peptide. This chain is Pelophylaxin-3, found in Pelophylax fukienensis (Fukien gold-striped pond frog).